A 309-amino-acid polypeptide reads, in one-letter code: Small ribosomal subunit protein mS23 (309 aa).

Belongs to the mitochondrion-specific ribosomal protein mS23 family. Component of the mitochondrial small ribosomal subunit.

The protein localises to the mitochondrion. The protein is Small ribosomal subunit protein mS23 (RSM25) of Lodderomyces elongisporus (strain ATCC 11503 / CBS 2605 / JCM 1781 / NBRC 1676 / NRRL YB-4239) (Yeast).